The primary structure comprises 317 residues: Probable arabinan endo-1,5-alpha-L-arabinosidase C (317 aa).

The N-terminal stretch at 1–17 (MLSFLAALSLPLALVNA) is a signal peptide. The Proton acceptor role is filled by Asp-32. The N-linked (GlcNAc...) asparagine glycan is linked to Asn-190. The Proton donor role is filled by Glu-198.

The protein belongs to the glycosyl hydrolase 43 family.

It localises to the secreted. The catalysed reaction is Endohydrolysis of (1-&gt;5)-alpha-arabinofuranosidic linkages in (1-&gt;5)-arabinans.. It participates in glycan metabolism; L-arabinan degradation. In terms of biological role, endo-1,5-alpha-L-arabinanase involved in degradation of pectin. Its preferred substrate is linear 1,5-alpha-L-arabinan. In Aspergillus flavus (strain ATCC 200026 / FGSC A1120 / IAM 13836 / NRRL 3357 / JCM 12722 / SRRC 167), this protein is Probable arabinan endo-1,5-alpha-L-arabinosidase C (abnC).